We begin with the raw amino-acid sequence, 615 residues long: Erythritol-mannosyl-transferase 1 (615 aa).

The interval 366 to 387 is disordered; the sequence is RTPNNTGASTPTAPISSPDFEE. Residues 367 to 380 show a composition bias toward polar residues; the sequence is TPNNTGASTPTAPI.

It belongs to the UDP-glycosyltransferase family.

The protein localises to the vacuole membrane. Its pathway is secondary metabolite biosynthesis. In terms of biological role, erythritol-mannosyl-transferase; part of the gene cluster that mediates the biosynthesis of mannosylerythritol lipids (MELs), surface-active substances that enhance the availability of water-insoluble substrates. Mannosylerythritol lipid production is responsible for hemolytic activity of Ustilago maydis. Depending on the number of acetyl groups, mannosylerythritol lipids can be differentiated into MEL A (fully acetylated), MEL B and MEL C (monoacetylated at R-6 and R-4, respectively), and the fully deacetylated MEL D. The first step in the pathway is the generation of mannosylerythritol by the glycosyltransferase EMT1 which catalyzes the transfer of GDP-mannose to the C-4 atom of meso-erythritol. This reaction has to be stereospecific, since only mannosyl-D-erythritol is generated. The produced disaccharide is subsequently acylated with fatty acids of various lengths derived from the peroxisomal beta-oxidation by the peroxisomal acyltransferases MAC1 and MAC2 at positions C-2 and C-3, repectively. The existence of MEL derivatives which carry an acetyl group at C-2 implies that at least MAC1 also accepts acetyl-CoA as a donor. The final step of MEL biosynthesis is the acetylation of the fully acylated mannosylerythritol lipids catalyzed by the acetyl-CoA-dependent acetyltransferase MAT1. MAT1 displays a relaxed regioselectivity and is able to transfer acetylgroups to both positions C-4 and C-6 of the mannosyl moiety. The polypeptide is Erythritol-mannosyl-transferase 1 (Mycosarcoma maydis (Corn smut fungus)).